A 261-amino-acid polypeptide reads, in one-letter code: Kallikrein 1-related peptidase b1 (261 aa).

The first 18 residues, 1-18 (MWFLILFLALSLGGIDAA), serve as a signal peptide directing secretion. Residues 19 to 24 (PPVQSR) constitute a propeptide, activation peptide. In terms of domain architecture, Peptidase S1 spans 25-258 (IVGGFKCEKN…FTSWIKDTLA (234 aa)). Intrachain disulfides connect cysteine 31–cysteine 173, cysteine 50–cysteine 66, cysteine 152–cysteine 219, cysteine 184–cysteine 198, and cysteine 209–cysteine 234. Histidine 65 acts as the Charge relay system in catalysis. Asparagine 102 is a glycosylation site (N-linked (GlcNAc...) asparagine). The active-site Charge relay system is the aspartate 120. The active-site Charge relay system is the serine 213.

The protein belongs to the peptidase S1 family. Kallikrein subfamily.

It catalyses the reaction Preferential cleavage of Arg-|-Xaa bonds in small molecule substrates. Highly selective action to release kallidin (lysyl-bradykinin) from kininogen involves hydrolysis of Met-|-Xaa or Leu-|-Xaa.. Its function is as follows. Glandular kallikreins cleave Met-Lys and Arg-Ser bonds in kininogen to release Lys-bradykinin. The chain is Kallikrein 1-related peptidase b1 (Klk1b1) from Mus musculus (Mouse).